The primary structure comprises 864 residues: E3 ubiquitin-protein ligase Itchy (864 aa).

In terms of domain architecture, C2 spans 1–115 (MSDSGPQLDS…LKSNNMKLEE (115 aa)). An N-acetylserine modification is found at Ser-2. Positions 151–164 (NGETSCSESTTQND) are enriched in polar residues. The segment at 151 to 294 (NGETSCSEST…SQAPLPPGWE (144 aa)) is disordered. The segment covering 165–174 (DGCRTRDDTR) has biased composition (basic and acidic residues). Residues 195 to 206 (NGNNSPSLSNGG) are compositionally biased toward low complexity. Ser-199 bears the Phosphoserine; by MAPK8 mark. The span at 210–224 (SRPPRPSRPPPPTPR) shows a compositional bias: pro residues. Thr-222 bears the Phosphothreonine; by MAPK8 mark. A compositionally biased stretch (low complexity) spans 230-259 (NGSPSTNSDSDGSSTGSLPPTNTNVNTSTS). Ser-232 carries the phosphoserine; by MAPK8 modification. 2 WW domains span residues 287–320 (APLPPGWEQRVDQHGRVYYVDHVEKRTTWDRPEP) and 319–352 (EPLPPGWERRVDNMGRIYYVDHFTRTTTWQRPTL). Thr-346 is subject to Phosphothreonine; by SGK3. The tract at residues 356–432 (RNYEQWQLQR…RITQWEDPRS (77 aa)) is required for interaction with FYN. Phosphotyrosine; by FYN is present on Tyr-381. WW domains are found at residues 399 to 432 (GPLPPGWEKRTDSNGRVYFVNHNTRITQWEDPRS) and 439 to 472 (KPLPEGWEMRFTVDGIPYFVDHNRRATTYIDPRT). Ser-411 is subject to Phosphoserine; by SGK3. An HECT domain is found at 530-864 (SPQDLRRRLW…IEETEGFGQE (335 aa)). The segment at 535-544 (RRRLWVIFPG) is MAP kinase docking site. The active-site Glycyl thioester intermediate is Cys-832.

Monomer. Part of a ternary complex composed of SMAD3, ITCH/AIP4 and NEDD9/HEF1; within the complex NEDD9/HEF1 interacts (via N-terminus) with ITCH/AIP4 (via WW domains); the complex mediates ubiquitination and proteasomal degradation of NEDD9/HEF1. Interacts (via WW domains) with OCNL. Interacts (via WW domains) with NOTCH1. Interacts (via WW domains) JUN. Interacts with JUNB; the interaction promotes ITCH-mediated ubiquitination and degradation of JUNB. Interacts with FYN; the interaction phosphorylates ITCH on Tyr-381 decreasing binding of JUNB. Interacts (via WW domain 2) with N4BP1; the interaction inhibits the E3 ubiquitin-protein ligase activity. Interacts with NDFIP1 and NDFIP2; the interaction with NDFIP proteins activates the E3 ubiquitin-protein ligase and may induce its recruitment to exosomes. Interacts with ARHGEF7. Interacts with RNF11. Interacts (via the WW 1 domain) with NFE2 (via the PXY motif 1); the interaction promotes 'Lys-63'-linked ubiquitination of NFE2, retains it in the cytoplasm and prevents its transactivation activity. Interacts (via WW domains) with CXCR4 (via C-terminus); the interaction depends on CXCR4 phosphorylation. Found in a complex with E3 ligase DTX3L and ESCRT-0 components HGS and STAM. Interacts with DTX3L (via C-terminus); the interaction is increased upon CXCL12 stimulation and inhibits ITCH catalytic activity (the interaction is direct). Interacts with HGS. Interacts (via WW domains) with PCBP2 within a complex containing ITCH, MAVS and PCBP2. Interacts (via WW domains) with TXNIP (via C-terminus). Interacts with p15 BID. Interacts with ERBB4. Interacts with DTX1. Interacts with SPART. Interacts with SNX9 and SNX18. Interacts (via its WW domains) with ATN1. Interacts (via WW domains) with SGK3. Interacts with CBLC. Interacts with OTUD7B. Interacts (via WW domain 1,2 and 3) with PI4K2A; the interaction inhibits PI4K2A catalytic activity and promotes ITCH catalytic activity. Interacts with ARRDC4. Part of a complex containing ITCH, NDFIP1 and MAP3K7. Interacts with UBE2L3; the interaction is mediated by NDFIP1. Interacts with MAPK8/JNK1. Interacts (via WW domains) with ARRDC1 (via PPxY motifs); the interaction is direct and participates in the recruitment of the ubiquitin-protein ligase ITCH to the NOTCH1 receptor. Interacts (via WW domains) with ARRDC2. Interacts (via WW domains) with ARRDC3. Interacts directly with LDLRAD3; this interaction promotes ITCH auto-ubiquitination leading to its degradation. Interacts with ENTREP1; enhances the ubiquitination of CXCR4 by ITCH and its subsequent endocytosis. Interacts with USP12 and WDR48/UAF1; the interaction is more efficient when both USP12 and WDR48/UAF1 are involved and may facilitate the recruitment of the USP12 deubiquitinase complex to Notch. In terms of assembly, (Microbial infection) Interacts with Epstein-Barr virus LMP2A. In terms of processing, on T-cell activation, phosphorylation by the JNK cascade on serine and threonine residues surrounding the PRR domain accelerates the ubiquitination and degradation of JUN and JUNB. The increased ITCH catalytic activity due to phosphorylation by JNK1 may occur due to a conformational change disrupting the interaction between the PRR/WW motifs domain and the HECT domain and, thus exposing the HECT domain. Phosphorylation by FYN reduces interaction with JUNB and negatively controls JUN ubiquitination and degradation. Interacts directly with LDLRAD3; this interaction promotes ITCH auto-ubiquitination leading to its degradation. Post-translationally, monoubiquitinated. Autopolyubiquitinated with 'Lys-63' linkages which does not lead to protein degradation. Detected in uterus (at protein level). Widely expressed.

Its subcellular location is the cell membrane. It is found in the cytoplasm. The protein localises to the nucleus. It localises to the early endosome membrane. The protein resides in the endosome membrane. It catalyses the reaction S-ubiquitinyl-[E2 ubiquitin-conjugating enzyme]-L-cysteine + [acceptor protein]-L-lysine = [E2 ubiquitin-conjugating enzyme]-L-cysteine + N(6)-ubiquitinyl-[acceptor protein]-L-lysine.. It participates in protein modification; protein ubiquitination. With respect to regulation, activated by NDFIP1- and NDFIP2-binding. Activated by PI4K2A-binding. Inhibited by DTX3L-binding. Inhibited by N4BP1 binding. Functionally, acts as an E3 ubiquitin-protein ligase which accepts ubiquitin from an E2 ubiquitin-conjugating enzyme in the form of a thioester and then directly transfers the ubiquitin to targeted substrates. It catalyzes 'Lys-29'-, 'Lys-48'- and 'Lys-63'-linked ubiquitin conjugation. Involved in the control of inflammatory signaling pathways. Is an essential component of a ubiquitin-editing protein complex, comprising also TNFAIP3, TAX1BP1 and RNF11, that ensures the transient nature of inflammatory signaling pathways. Promotes the association of the complex after TNF stimulation. Once the complex is formed, TNFAIP3 deubiquitinates 'Lys-63' polyubiquitin chains on RIPK1 and catalyzes the formation of 'Lys-48'-polyubiquitin chains. This leads to RIPK1 proteasomal degradation and consequently termination of the TNF- or LPS-mediated activation of NFKB1. Ubiquitinates RIPK2 by 'Lys-63'-linked conjugation and influences NOD2-dependent signal transduction pathways. Regulates the transcriptional activity of several transcription factors involved in immune response. Ubiquitinates NFE2 by 'Lys-63' linkages and is implicated in the control of the development of hematopoietic lineages. Mediates JUN ubiquitination and degradation. Mediates JUNB ubiquitination and degradation. Critical regulator of type 2 helper T (Th2) cell cytokine production by inducing JUNB ubiquitination and degradation. Involved in the negative regulation of MAVS-dependent cellular antiviral responses. Ubiquitinates MAVS through 'Lys-48'-linked conjugation resulting in MAVS proteasomal degradation. Following ligand stimulation, regulates sorting of Wnt receptor FZD4 to the degradative endocytic pathway probably by modulating PI42KA activity. Ubiquitinates PI4K2A and negatively regulates its catalytic activity. Ubiquitinates chemokine receptor CXCR4 and regulates sorting of CXCR4 to the degradative endocytic pathway following ligand stimulation by ubiquitinating endosomal sorting complex required for transport ESCRT-0 components HGS and STAM. Targets DTX1 for lysosomal degradation and controls NOTCH1 degradation, in the absence of ligand, through 'Lys-29'-linked polyubiquitination. Ubiquitinates SNX9. Ubiquitinates MAP3K7 through 'Lys-48'-linked conjugation. Together with UBR5, involved in the regulation of apoptosis and reactive oxygen species levels through the ubiquitination and proteasomal degradation of TXNIP: catalyzes 'Lys-48'-/'Lys-63'-branched ubiquitination of TXNIP. ITCH synthesizes 'Lys-63'-linked chains, while UBR5 is branching multiple 'Lys-48'-linked chains of substrate initially modified. Mediates the antiapoptotic activity of epidermal growth factor through the ubiquitination and proteasomal degradation of p15 BID. Ubiquitinates BRAT1 and this ubiquitination is enhanced in the presence of NDFIP1. Ubiquitinates NEDD9/HEF1, resulting in proteasomal degradation of NEDD9/HEF1. This is E3 ubiquitin-protein ligase Itchy (Itch) from Mus musculus (Mouse).